The chain runs to 180 residues: MQEKAVVLDDQMIRRALTRISHEIVERNKGVDNCVLVGIKTRGIFIAQRLAERIGQIEGKEIEVGELDITLYRDDLTLQSKNKEPLVKGSDIPVDITKKKVILVDDVLYTGRTVRAAMDALMDLGRPSQIQLAVLVDRGHRELPIRADYVGKNIPTSSEERIEVDLQETDQQDRVSIYDK.

The short motif at 101–113 (VILVDDVLYTGRT) is the PRPP-binding element.

The protein belongs to the purine/pyrimidine phosphoribosyltransferase family. PyrR subfamily. As to quaternary structure, homodimer and homohexamer; in equilibrium.

The catalysed reaction is UMP + diphosphate = 5-phospho-alpha-D-ribose 1-diphosphate + uracil. Functionally, regulates transcriptional attenuation of the pyrimidine nucleotide (pyr) operon by binding in a uridine-dependent manner to specific sites on pyr mRNA. This disrupts an antiterminator hairpin in the RNA and favors formation of a downstream transcription terminator, leading to a reduced expression of downstream genes. In terms of biological role, also displays a weak uracil phosphoribosyltransferase activity which is not physiologically significant. This Bacillus thuringiensis subsp. konkukian (strain 97-27) protein is Bifunctional protein PyrR.